A 154-amino-acid polypeptide reads, in one-letter code: Endoribonuclease YbeY (154 aa).

Zn(2+) is bound by residues His-114, His-118, and His-124.

It belongs to the endoribonuclease YbeY family. Zn(2+) serves as cofactor.

The protein localises to the cytoplasm. In terms of biological role, single strand-specific metallo-endoribonuclease involved in late-stage 70S ribosome quality control and in maturation of the 3' terminus of the 16S rRNA. This chain is Endoribonuclease YbeY, found in Anaplasma phagocytophilum (strain HZ).